The following is a 107-amino-acid chain: Ig kappa chain V-VI region NQ2-48.2.2 (107 aa).

A framework-1 region spans residues Gln-1–Cys-23. A disulfide bridge links Cys-23 with Cys-87. Positions Ser-24 to His-33 are complementarity-determining-1. Residues Trp-34–Tyr-48 are framework-2. The interval Asp-49–Ser-55 is complementarity-determining-2. Residues Gly-56 to Cys-87 are framework-3. The tract at residues Gln-88 to Thr-96 is complementarity-determining-3. The interval Phe-97–Lys-106 is framework-4.

Anti-2-phenyl oxazolone (PHOX) Antibody. In Mus musculus (Mouse), this protein is Ig kappa chain V-VI region NQ2-48.2.2.